The sequence spans 1193 residues: Stress response protein nst1 (1193 aa).

Disordered regions lie at residues 1–197 (MVPA…SHNI), 288–368 (QGSF…TRAA), 422–468 (ESLH…EQRM), 508–815 (MEEE…MVAR), 857–942 (MPPG…TQRD), 966–988 (TLSQ…RASF), and 1145–1193 (DNNS…PMGF). The span at 10-29 (SPSSTMLNSSSTTAHAAPST) shows a compositional bias: low complexity. A compositionally biased stretch (basic residues) spans 53-63 (NRKKQKRRQKQ). Over residues 64–73 (AARLAERQLA) the composition is skewed to low complexity. Over residues 76–90 (HVSTDDTTQNGSSHA) the composition is skewed to polar residues. Residues 91 to 128 (NPERYHSDDGGADGPDHEQPTNGDVYDKDGQDSMDAHV) are compositionally biased toward basic and acidic residues. Residues 129-140 (DSQNPQGPNGTE) are compositionally biased toward polar residues. A compositionally biased stretch (basic residues) spans 146-160 (TGRKSKKKKGKKARN). The span at 169–182 (TSTPMSTPSVSMSH) shows a compositional bias: low complexity. Positions 312 to 321 (GQHTRTQGQF) are enriched in polar residues. Composition is skewed to acidic residues over residues 332-364 (TEED…EDEE) and 434-463 (DDED…DAMT). Positions 448–659 (SQEEEDYEED…EEQAKKDTAK (212 aa)) form a coiled coil. Basic and acidic residues-rich tracts occupy residues 508–527 (MEEE…EAQK) and 537–675 (QAKE…DQAK). The segment covering 722 to 740 (RQPSQQDSHSSSPHSQAPS) has biased composition (low complexity). The span at 741 to 769 (TDPSQASLSPRSMPVSQSSGVASGNSQQG) shows a compositional bias: polar residues. The span at 914 to 926 (PISRPSPIKRPSS) shows a compositional bias: low complexity. The span at 933–942 (KGGDRTTQRD) shows a compositional bias: basic and acidic residues. The segment covering 972–986 (PGATAPGTFPGPARA) has biased composition (low complexity). A compositionally biased stretch (polar residues) spans 1182–1193 (VLRQYSSPPMGF).

Belongs to the NST1 family.

The protein localises to the cytoplasm. Its function is as follows. May act as a negative regulator of salt tolerance. The sequence is that of Stress response protein nst1 (nst1) from Neosartorya fischeri (strain ATCC 1020 / DSM 3700 / CBS 544.65 / FGSC A1164 / JCM 1740 / NRRL 181 / WB 181) (Aspergillus fischerianus).